The primary structure comprises 138 residues: Large ribosomal subunit protein uL16 (138 aa).

The span at 1–16 (MLIPRRVKHRKQHHPS) shows a compositional bias: basic residues. The segment at 1-25 (MLIPRRVKHRKQHHPSRSGAAKGGT) is disordered.

It belongs to the universal ribosomal protein uL16 family. As to quaternary structure, part of the 50S ribosomal subunit.

Binds 23S rRNA and is also seen to make contacts with the A and possibly P site tRNAs. The sequence is that of Large ribosomal subunit protein uL16 from Rhodococcus jostii (strain RHA1).